A 303-amino-acid chain; its full sequence is MTAKVLDGKATAAAIKEELRGRVAALAERGRTPGLGTLLVGEDAGSQKYVAGKHRDCAEVGIESIQRELPADATEEQILDVVRELNEDPACTGYIVQLPLPKHVDTQKVLEAIDPDKDADGLHPMNLGRLVASVGGELDSPLPCTPAGCVELLRHHGVELAGKHVLVIGRGVTIGRPAGLVLTRREVNATVTLAHTGTTNLDELLASADVVIAAAGSAHMVTPEQVKEGVIVLDVGVSRVTGEDGKSRVLGDVDPAVKEKAAWMAPNPGGVGPMTRVMLLANVVEAAERAADGENWAGERAGA.

NADP(+) is bound by residues 169-171 (GRG), Thr196, and Val237.

The protein belongs to the tetrahydrofolate dehydrogenase/cyclohydrolase family. As to quaternary structure, homodimer.

The catalysed reaction is (6R)-5,10-methylene-5,6,7,8-tetrahydrofolate + NADP(+) = (6R)-5,10-methenyltetrahydrofolate + NADPH. It carries out the reaction (6R)-5,10-methenyltetrahydrofolate + H2O = (6R)-10-formyltetrahydrofolate + H(+). It participates in one-carbon metabolism; tetrahydrofolate interconversion. Its function is as follows. Catalyzes the oxidation of 5,10-methylenetetrahydrofolate to 5,10-methenyltetrahydrofolate and then the hydrolysis of 5,10-methenyltetrahydrofolate to 10-formyltetrahydrofolate. This chain is Bifunctional protein FolD, found in Micrococcus luteus (strain ATCC 4698 / DSM 20030 / JCM 1464 / CCM 169 / CCUG 5858 / IAM 1056 / NBRC 3333 / NCIMB 9278 / NCTC 2665 / VKM Ac-2230) (Micrococcus lysodeikticus).